A 291-amino-acid polypeptide reads, in one-letter code: Small ribosomal subunit biogenesis GTPase RsgA 2 (291 aa).

The region spanning 63–221 (ENALVRPPVA…VADTPGFSSI (159 aa)) is the CP-type G domain. GTP-binding positions include 112-115 (SKMD) and 164-172 (GQSGVGKST). The Zn(2+) site is built by Cys-245, Cys-250, His-252, and Cys-258.

It belongs to the TRAFAC class YlqF/YawG GTPase family. RsgA subfamily. In terms of assembly, monomer. Associates with 30S ribosomal subunit, binds 16S rRNA. Zn(2+) serves as cofactor.

The protein resides in the cytoplasm. Its function is as follows. One of several proteins that assist in the late maturation steps of the functional core of the 30S ribosomal subunit. Helps release RbfA from mature subunits. May play a role in the assembly of ribosomal proteins into the subunit. Circularly permuted GTPase that catalyzes slow GTP hydrolysis, GTPase activity is stimulated by the 30S ribosomal subunit. The chain is Small ribosomal subunit biogenesis GTPase RsgA 2 from Listeria monocytogenes serovar 1/2a (strain ATCC BAA-679 / EGD-e).